The sequence spans 221 residues: Lipoprotein-releasing system ATP-binding protein LolD (221 aa).

The region spanning 6 to 220 is the ABC transporter domain; the sequence is LILKNISKHY…YKLKHRLLNI (215 aa). Position 42 to 49 (42 to 49) interacts with ATP; the sequence is GSSGSGKS.

The protein belongs to the ABC transporter superfamily. Lipoprotein translocase (TC 3.A.1.125) family. As to quaternary structure, the complex is composed of two ATP-binding proteins (LolD) and two transmembrane proteins (LolC and LolE).

It localises to the cell inner membrane. Part of the ABC transporter complex LolCDE involved in the translocation of mature outer membrane-directed lipoproteins, from the inner membrane to the periplasmic chaperone, LolA. Responsible for the formation of the LolA-lipoprotein complex in an ATP-dependent manner. This Rickettsia conorii (strain ATCC VR-613 / Malish 7) protein is Lipoprotein-releasing system ATP-binding protein LolD.